Reading from the N-terminus, the 4998-residue chain is SCO-spondin (4998 aa).

The signal sequence occupies residues 1–17 (MLPLALLFGMLWTQANG). In terms of domain architecture, EMI spans 18 to 102 (HWCEQIETVH…ACCPGWGGAH (85 aa)). One can recognise a VWFD 1 domain in the interval 72 to 241 (GLCAIYKPPE…KLPGSEPGCL (170 aa)). 2 disulfides stabilise this stretch: C74–C202 and C103–C240. 2 N-linked (GlcNAc...) asparagine glycosylation sites follow: N88 and N130. Residues 349-404 (CPGGQLYSDCVSSCPPSCSAVAQGEEGSCGKECVSGCECPTGLFWDGALCVPAAHC) form the TIL 1 domain. A VWFC 1 domain is found at 404 to 496 (CPCYHRRQRY…HGACDTGSCL (93 aa)). Residues 442–615 (AECAVGGDGH…FQVSGDGRCP (174 aa)) form the VWFD 2 domain. Disulfide bonds link C444–C577 and C468–C614. 2 N-linked (GlcNAc...) asparagine glycosylation sites follow: N534 and N698. In terms of domain architecture, TIL 2 spans 706–759 (CPGGQVYQECAPVCGHHCGEPEDCKELGICVAGCNCPPGLLWDLEGQCVPPSMC). N771, N790, N824, and N866 each carry an N-linked (GlcNAc...) asparagine glycan. One can recognise a VWFD 3 domain in the interval 892–1062 (GWCQASGAPH…HSWRLNPLCP (171 aa)). Disulfide bonds link C894–C1026, C916–C1061, and C937–C944. The 57-residue stretch at 1153-1209 (CEGGQVYEPCGSTCPPTCHDHHSELRWHCQVITCVEGCFCPEGTLLHGGACMKLAAC) folds into the TIL 3 domain. N1230 carries an N-linked (GlcNAc...) asparagine glycan. 4 LDL-receptor class A domains span residues 1253–1290 (GCAEGETLCRENGHCVPLEWLCDNQDDCGDGSDEEGCA), 1293–1328 (VCGEGQMSCQSGHCLPLSLICDGQDDCGDGTDEQGC), 1329–1365 (LCPHGSLACADGRCLPPALLCNGHPDCLDAADEESCL), and 1369–1407 (SCISGEVSCVDGTCVRTIQLCDGVWDCPDGADEGPSHCS). 12 cysteine pairs are disulfide-bonded: C1254/C1267, C1261/C1280, C1274/C1289, C1294/C1306, C1301/C1319, C1313/C1328, C1330/C1342, C1337/C1355, C1349/C1364, C1370/C1382, C1377/C1395, and C1389/C1406. The segment at 1406–1440 (CSLPSLPTPPGGIGQNPSTSSLDTAPSPVGSTSPA) is disordered. Residues 1420–1440 (QNPSTSSLDTAPSPVGSTSPA) are compositionally biased toward polar residues. LDL-receptor class A domains are found at residues 1442–1478 (PCSLLEFQCNSGECTPRGWRCDQEEDCTDGSDELDCG) and 1480–1519 (PCMLYQVPCAHSPHCVSPGQLCDGVTQCPDGSDEDPDVCE). Disulfide bonds link C1443-C1455, C1450-C1468, C1462-C1477, C1481-C1494, C1488-C1507, and C1501-C1518. Residue N1528 is glycosylated (N-linked (GlcNAc...) asparagine). The LDL-receptor class A 7 domain maps to 1533–1571 (PCPEFSCPDGTCIDFLLVCDGNPDCELADETEPSLDEQG). Cystine bridges form between C1534-C1544, C1539-C1557, C1551-C1572, C1584-C1620, C1588-C1625, C1599-C1610, C1640-C1680, C1644-C1685, and C1654-C1664. 2 consecutive TSP type-1 domains span residues 1572–1626 (CGAW…EACP) and 1628–1686 (DGEW…EGCL). N1598 carries an N-linked (GlcNAc...) asparagine glycan. The N-linked (GlcNAc...) asparagine glycan is linked to N1687. Residues 1692 to 1746 (GELVFRTCAPCPLTCDDISGQAACPPDRPCSSPGCWCPDGKVLNTEGQCVRPRQC) form the TIL 4 domain. 2 consecutive EGF-like domains span residues 1702 to 1741 (CPLTCDDISGQAACPPDRPCSSPGCWCPDGKVLNTEGQCV) and 1742 to 1768 (RPRQCPCLVDGAHYWPGQRIKMDCQLC). A TSP type-1 3 domain is found at 1771 to 1827 (DCGWSSWSPWAECLGPCSSQSLQWSFRSPNNPRLSGHGRQCRGIHRKARRCQTEACE). 3 disulfides stabilise this stretch: C1772–C1811, C1783–C1787, and C1821–C1826. A VWFC 2 domain is found at 1827–1887 (EGCEQWGLMY…GMGESCCHCA (61 aa)). 2 N-linked (GlcNAc...) asparagine glycosylation sites follow: N1892 and N1989. The F5/8 type C domain maps to 1929-2085 (CYSPLGLAGL…IFLWVELLGL (157 aa)). In terms of domain architecture, LDL-receptor class A 8 spans 2091–2127 (LCPGSRHRCASGECAPKGGPCDGAVDCDDGSDEEGCG). Cystine bridges form between C2092-C2104, C2099-C2117, and C2111-C2126. The tract at residues 2119 to 2209 (DGSDEEGCGS…TFPPGAKSLH (91 aa)) is disordered. Residues 2130–2144 (HASTTSRTPALSPTQ) show a composition bias toward polar residues. Basic and acidic residues predominate over residues 2148 to 2158 (FPREVSEDLRQ). Composition is skewed to polar residues over residues 2164-2173 (TSHSPPSSGE) and 2190-2201 (QPMQTLSATSTF). LDL-receptor class A domains lie at 2242 to 2278 (PCGPGQVPCDVLGCVEQEQLCDGREDCLDGSDEQHCA) and 2299 to 2335 (LCSPSQLRCGSGECLPFEHRCDLQVNCQDGSDEDNCV). Intrachain disulfides connect C2243–C2255, C2250–C2268, C2262–C2277, C2300–C2312, C2307–C2325, C2319–C2334, C2337–C2373, C2348–C2352, C2383–C2388, C2403–C2440, C2407–C2445, and C2418–C2430. TSP type-1 domains lie at 2336–2389 (DCVL…QACP) and 2391–2446 (AGAW…QLCP). One can recognise a TIL 5 domain in the interval 2468 to 2511 (VPPCPPSCLDPEANRSCSGHCMEGCRCPPGLLLQDSHCLPLSEC). N-linked (GlcNAc...) asparagine glycosylation is found at N2481 and N2530. TSP type-1 domains lie at 2551 to 2605 (SCGW…TDCG), 2609 to 2664 (PGWT…PVCP), and 2666 to 2719 (PSAW…HPCT). 9 disulfides stabilise this stretch: C2552-C2590, C2563-C2567, C2600-C2604, C2620-C2658, C2624-C2663, C2640-C2648, C2678-C2713, C2682-C2718, and C2693-C2703. N2772 and N2802 each carry an N-linked (GlcNAc...) asparagine glycan. 2 consecutive TSP type-1 domains span residues 2820–2875 (ACGW…RPCR) and 2876–2919 (GPGA…QPCA). Disulfide bonds link C2821/C2859, C2832/C2836, and C2869/C2874. 4 N-linked (GlcNAc...) asparagine glycosylation sites follow: N2897, N2952, N2999, and N3009. The 53-residue stretch at 2926–2978 (CPEDQQWLDCAQGPASCAHLSIPGEANQTCHPGCYCLSGMLLLNNVCVPVQDC) folds into the TIL 6 domain. TSP type-1 domains are found at residues 3019 to 3086 (QPAW…PGCN) and 3088 to 3143 (AGGW…QPCP). 6 disulfide bridges follow: C3031-C3080, C3035-C3085, C3046-C3070, C3100-C3137, C3104-C3142, and C3115-C3127. The N-linked (GlcNAc...) asparagine glycan is linked to N3146. In terms of domain architecture, TIL 7 spans 3151–3201 (EGAEYSPCGPPCPRSCDDLVHCVWRCQPGCYCPLGKVLSADGAICVKPSYC). N3235 carries an N-linked (GlcNAc...) asparagine glycan. TSP type-1 domains follow at residues 3244-3306 (SGDW…TACP) and 3308-3363 (DGAW…TLCT). Intrachain disulfides connect C3256-C3299, C3260-C3305, C3271-C3283, C3320-C3355, C3323-C3362, and C3333-C3345. N-linked (GlcNAc...) asparagine glycosylation is present at N3301. N3357 carries an N-linked (GlcNAc...) asparagine glycan. In terms of domain architecture, TIL 8 spans 3365 to 3421 (CGGGQDLLPCGQPCPHSCQDLSLGSTCQPGSAGCQSGCGCPPGQLSQDGLCVFPVDC). Residues N3435 and N3462 are each glycosylated (N-linked (GlcNAc...) asparagine). One can recognise a TSP type-1 15 domain in the interval 3481–3529 (PGIWSSWGPWEKCSVSCGGGEQLRSRQCARPPCPGLAQQSRICHIHVCR). 3 disulfides stabilise this stretch: C3493–C3523, C3497–C3528, and C3508–C3513. N-linked (GlcNAc...) asparagine glycosylation is present at N3638. TSP type-1 domains lie at 3657-3713 (HGSF…PECP), 3727-3779 (AGGW…PSCA), 3793-3849 (NCFW…RACP), and 3851-3906 (PGGW…MPCE). Intrachain disulfides connect C3669–C3707, C3673–C3712, and C3685–C3697. An N-linked (GlcNAc...) asparagine glycan is attached at N3761. Intrachain disulfides connect C3794-C3830, C3805-C3809, C3843-C3848, C3863-C3900, C3867-C3905, and C3878-C3890. Positions 3909-3964 (CPAGMEMVSCANHCPYSCSDLQEGGMCQEDQACQLGCRCSEGFLEQDGGCVPVGHC) constitute a TIL 9 domain. Residue N3986 is glycosylated (N-linked (GlcNAc...) asparagine). TSP type-1 domains lie at 4006–4059 (HCAW…VPCP), 4100–4155 (PRGW…QLCL), 4157–4213 (KLER…GPCQ), and 4215–4269 (DCTW…GNCS). 12 cysteine pairs are disulfide-bonded: C4007–C4043, C4018–C4022, C4053–C4058, C4112–C4149, C4116–C4154, C4127–C4139, C4169–C4207, C4173–C4212, C4184–C4195, C4216–C4253, C4227–C4229, and C4263–C4268. N-linked (GlcNAc...) asparagine glycosylation is present at N4196. N-linked (GlcNAc...) asparagine glycosylation is present at N4267. One can recognise a TIL 10 domain in the interval 4273–4328 (CPPPFEFQSCGSPCAGLCATHLNHRLCQDLPPCQPGCYCPKGLLEQAGSCILPEQC). N4408 and N4463 each carry an N-linked (GlcNAc...) asparagine glycan. A TSP type-1 24 domain is found at 4465–4516 (TCQWGPWGPWSPCQMPCSGGFKLRWRVARDTSAGECPGPWAQTESCNMGSCP). Cystine bridges form between C4466/C4500, C4477/C4481, and C4510/C4515. The TIL 11 domain maps to 4530-4576 (DCANQCPRSCADLWDGVQCLQGPCSPGCRCPPGQLVQDGHCVPISSC). Residues N4584, N4601, and N4606 are each glycosylated (N-linked (GlcNAc...) asparagine). The TSP type-1 25 domain maps to 4616 to 4669 (CPVLGPWSAWSECSAVCGKGTMVRHRSCEEHPDREPCQALDLQQWQECNLQACP). 3 cysteine pairs are disulfide-bonded: C4628–C4663, C4632–C4668, and C4643–C4652. The region spanning 4671–4725 (CPPGQVLSTCATMCPSLCSHLWPGTICVREPCQLGCGCPGGQLLYNGTCIPPEAC) is the TIL 12 domain. N-linked (GlcNAc...) asparagine glycosylation is found at N4716, N4756, N4799, and N4806. The region spanning 4777–4835 (CAPGEIWQHGKLGPCEKTCPEMNMTQAWSNCTEAQAPGCVCQLGYFRSQTGLCVPEDHC) is the TIL 13 domain. Residues 4835–4893 (CECWHHGSPHLPGSEWQEACESCRCLHGKSVCIRHCPELSCAQGEVIMQEPGSCCPICQ) enclose the VWFC 3 domain. 4 cysteine pairs are disulfide-bonded: C4892-C4952, C4918-C4969, C4928-C4985, and C4932-C4987. The region spanning 4892-4991 (CQQDTLKEEP…IHSCQCSACQ (100 aa)) is the CTCK domain. N4912 carries an N-linked (GlcNAc...) asparagine glycan.

It belongs to the thrombospondin family. In terms of tissue distribution, subcommissural organ.

The protein resides in the secreted. Its subcellular location is the extracellular space. Its function is as follows. Involved in the modulation of neuronal aggregation. May be involved in developmental events during the formation of the central nervous system. In Mus musculus (Mouse), this protein is SCO-spondin.